We begin with the raw amino-acid sequence, 295 residues long: 4-hydroxy-tetrahydrodipicolinate synthase (295 aa).

Thr48 provides a ligand contact to pyruvate. Tyr136 serves as the catalytic Proton donor/acceptor. Lys164 (schiff-base intermediate with substrate) is an active-site residue. Ile206 is a pyruvate binding site.

The protein belongs to the DapA family. Homotetramer; dimer of dimers.

The protein localises to the cytoplasm. The catalysed reaction is L-aspartate 4-semialdehyde + pyruvate = (2S,4S)-4-hydroxy-2,3,4,5-tetrahydrodipicolinate + H2O + H(+). It functions in the pathway amino-acid biosynthesis; L-lysine biosynthesis via DAP pathway; (S)-tetrahydrodipicolinate from L-aspartate: step 3/4. In terms of biological role, catalyzes the condensation of (S)-aspartate-beta-semialdehyde [(S)-ASA] and pyruvate to 4-hydroxy-tetrahydrodipicolinate (HTPA). This Actinobacillus pleuropneumoniae serotype 5b (strain L20) protein is 4-hydroxy-tetrahydrodipicolinate synthase.